Reading from the N-terminus, the 365-residue chain is Histidinol-phosphate aminotransferase (365 aa).

Position 222 is an N6-(pyridoxal phosphate)lysine (lysine 222).

This sequence belongs to the class-II pyridoxal-phosphate-dependent aminotransferase family. Histidinol-phosphate aminotransferase subfamily. In terms of assembly, homodimer. Pyridoxal 5'-phosphate is required as a cofactor.

It catalyses the reaction L-histidinol phosphate + 2-oxoglutarate = 3-(imidazol-4-yl)-2-oxopropyl phosphate + L-glutamate. It functions in the pathway amino-acid biosynthesis; L-histidine biosynthesis; L-histidine from 5-phospho-alpha-D-ribose 1-diphosphate: step 7/9. The sequence is that of Histidinol-phosphate aminotransferase from Geobacillus sp. (strain WCH70).